The primary structure comprises 592 residues: Ferric-chelate reductase 1 (592 aa).

The helical transmembrane segment at 2–22 (AAPQITLSVLVIALLTCSVTA) threads the bilayer. In terms of domain architecture, Reelin spans 13 to 179 (IALLTCSVTA…FTTPKATTQP (167 aa)). N-linked (GlcNAc...) asparagine glycosylation is found at Asn85, Asn308, Asn321, and Asn353. In terms of domain architecture, DOMON spans 216–331 (EPACVFLSFT…ESYYIFFAEG (116 aa)). The Cytochrome b561 domain occupies 335–534 (DGRIFRHSQQ…IGTEVILEIH (200 aa)). Residues 372–392 (AHGALMFVAWMTTVSIGVLVA) traverse the membrane as a helical segment. The heme b site is built by His373 and His414. 5 consecutive transmembrane segments (helical) span residues 415 to 435 (RMLMVATSLLTCVAFVLPFVY), 446 to 466 (HPYLGCTVMTLAVLQPLLATF), 477 to 499 (VFNWTHWSVGTAARIIAVAAMFL), 515 to 535 (YAMMGFVVWHIGTEVILEIHA), and 569 to 589 (VVLAVYICGNVIFLSIFLSAI). 2 residues coordinate heme b: His446 and His482.

It belongs to the FRRS1 family. It depends on heme b as a cofactor. As to expression, expressed in spleen, liver and kidney with low expression in brain. Localizes in adult brain to the choroid plexus of the fourth, third, and lateral ventricles and to ependymal cells that line the ventricles.

The protein resides in the membrane. Functionally, ferric-chelate reductases reduce Fe(3+) to Fe(2+) before its transport from the endosome to the cytoplasm. In Mus musculus (Mouse), this protein is Ferric-chelate reductase 1 (FRRS1).